A 259-amino-acid chain; its full sequence is NAD kinase (259 aa).

D43 serves as the catalytic Proton acceptor. Residues D43 to G44, N111 to E112, and R136 each bind NAD(+).

Belongs to the NAD kinase family. The cofactor is a divalent metal cation.

It localises to the cytoplasm. The enzyme catalyses NAD(+) + ATP = ADP + NADP(+) + H(+). Its function is as follows. Involved in the regulation of the intracellular balance of NAD and NADP, and is a key enzyme in the biosynthesis of NADP. Catalyzes specifically the phosphorylation on 2'-hydroxyl of the adenosine moiety of NAD to yield NADP. This Mycoplasma genitalium (strain ATCC 33530 / DSM 19775 / NCTC 10195 / G37) (Mycoplasmoides genitalium) protein is NAD kinase.